Here is a 103-residue protein sequence, read N- to C-terminus: Large ribosomal subunit protein bL21 (103 aa).

It belongs to the bacterial ribosomal protein bL21 family. In terms of assembly, part of the 50S ribosomal subunit. Contacts protein L20.

This protein binds to 23S rRNA in the presence of protein L20. The chain is Large ribosomal subunit protein bL21 from Marinobacter nauticus (strain ATCC 700491 / DSM 11845 / VT8) (Marinobacter aquaeolei).